The chain runs to 589 residues: Serine/threonine-protein kinase shk2 (589 aa).

A PH domain is found at 23-125; it reads GIIRSGWVML…WMDLISSRAL (103 aa). The region spanning 129–142 is the CRIB domain; that stretch reads VSSPMNPKHQVHVG. The Protein kinase domain maps to 309–566; that stretch reads FNVKHKLGQG…AAELLTHSFL (258 aa). ATP contacts are provided by residues 315-323 and K343; that span reads LGQGASGSV. The Proton acceptor role is filled by D434.

The protein belongs to the protein kinase superfamily. STE Ser/Thr protein kinase family. STE20 subfamily.

The enzyme catalyses L-seryl-[protein] + ATP = O-phospho-L-seryl-[protein] + ADP + H(+). It carries out the reaction L-threonyl-[protein] + ATP = O-phospho-L-threonyl-[protein] + ADP + H(+). Functionally, forms an activated complex with GTP-bound Ras-like cdc42. Participates in Ras-dependent morphological control and mating response pathways. The chain is Serine/threonine-protein kinase shk2 (shk2) from Schizosaccharomyces pombe (strain 972 / ATCC 24843) (Fission yeast).